A 1103-amino-acid polypeptide reads, in one-letter code: Coatomer subunit beta (1103 aa).

7 HEAT repeats span residues 51-89 (EAYT…CRPD), 94-129 (EEMI…RQFK), 130-166 (VLEP…NFGL), 247-284 (QQKA…APVS), 322-359 (RTME…KNSV), 365-404 (VLKR…RFPE), and 405-441 (AAAS…TCVH).

Oligomeric complex that consists of at least the alpha, beta, beta', gamma, delta, epsilon and zeta subunits.

Its subcellular location is the cytoplasm. The protein resides in the golgi apparatus membrane. It is found in the cytoplasmic vesicle. The protein localises to the COPI-coated vesicle membrane. Its function is as follows. The coatomer is a cytosolic protein complex that binds to dilysine motifs and reversibly associates with Golgi non-clathrin-coated vesicles, which further mediate biosynthetic protein transport from the ER, via the Golgi up to the trans Golgi network. Coatomer complex is required for budding from Golgi membranes, and is essential for the retrograde Golgi-to-ER transport of dilysine-tagged proteins. The sequence is that of Coatomer subunit beta from Toxoplasma gondii.